A 318-amino-acid chain; its full sequence is tRNA pseudouridine synthase B (318 aa).

The active-site Nucleophile is the Asp-47.

Belongs to the pseudouridine synthase TruB family. Type 1 subfamily.

It carries out the reaction uridine(55) in tRNA = pseudouridine(55) in tRNA. Responsible for synthesis of pseudouridine from uracil-55 in the psi GC loop of transfer RNAs. This is tRNA pseudouridine synthase B from Shewanella putrefaciens (strain CN-32 / ATCC BAA-453).